Reading from the N-terminus, the 416-residue chain is Glutamyl-tRNA reductase (416 aa).

Residues 46-49, Ser-97, 102-104, and Gln-108 each bind substrate; these read TCNR and DHE. The active-site Nucleophile is the Cys-47. 178-183 contributes to the NADP(+) binding site; the sequence is GAGMAA.

Belongs to the glutamyl-tRNA reductase family. In terms of assembly, homodimer.

It catalyses the reaction (S)-4-amino-5-oxopentanoate + tRNA(Glu) + NADP(+) = L-glutamyl-tRNA(Glu) + NADPH + H(+). Its pathway is porphyrin-containing compound metabolism; protoporphyrin-IX biosynthesis; 5-aminolevulinate from L-glutamyl-tRNA(Glu): step 1/2. In terms of biological role, catalyzes the NADPH-dependent reduction of glutamyl-tRNA(Glu) to glutamate 1-semialdehyde (GSA). In Aeropyrum pernix (strain ATCC 700893 / DSM 11879 / JCM 9820 / NBRC 100138 / K1), this protein is Glutamyl-tRNA reductase.